The chain runs to 253 residues: GTP cyclohydrolase III (253 aa).

The protein belongs to the archaeal-type GTP cyclohydrolase family.

The catalysed reaction is GTP + 3 H2O = 2-amino-5-formylamino-6-(5-phospho-D-ribosylamino)pyrimidin-4(3H)-one + 2 phosphate + 2 H(+). Catalyzes the formation of 2-amino-5-formylamino-6-ribofuranosylamino-4(3H)-pyrimidinone ribonucleotide monophosphate and inorganic phosphate from GTP. Also has an independent pyrophosphate phosphohydrolase activity. The chain is GTP cyclohydrolase III from Natronomonas pharaonis (strain ATCC 35678 / DSM 2160 / CIP 103997 / JCM 8858 / NBRC 14720 / NCIMB 2260 / Gabara) (Halobacterium pharaonis).